Reading from the N-terminus, the 660-residue chain is Nuclear factor erythroid 2-related factor 3 (660 aa).

Positions 120-214 (SAVGDGGQSA…KTEEHKMACA (95 aa)) are disordered. Residues 123–135 (GDGGQSASAGGGD) are compositionally biased toward gly residues. Basic and acidic residues-rich tracts occupy residues 173–186 (MLRE…HSSQ) and 204–214 (SKTEEHKMACA). Residues 541-604 (LIRDIRRRGK…DIMRQKLHGL (64 aa)) form the bZIP domain. The segment at 543–562 (RDIRRRGKNKVAAQNCRKRK) is basic motif. Residues 566–573 (ILNLEDDI) form a leucine-zipper region.

The protein belongs to the bZIP family. CNC subfamily. In terms of assembly, heterodimer with MAFG, MAFK and other small MAF proteins that binds to the MAF recognition elements (MARE). As to expression, high level expression in brain, thymus, testis and placenta. Medium level expression in uterus, stomach and lung. Low level expression in kidney. No expression in heart, liver, spleen and ovary.

It is found in the nucleus. Activates erythroid-specific, globin gene expression. The chain is Nuclear factor erythroid 2-related factor 3 (Nfe2l3) from Mus musculus (Mouse).